Consider the following 721-residue polypeptide: Polyribonucleotide nucleotidyltransferase (721 aa).

Mg(2+) is bound by residues Asp-495 and Asp-501. The KH domain maps to Pro-562 to Ile-621. The 69-residue stretch at Gly-631 to Arg-699 folds into the S1 motif domain. The interval Leu-698–Ser-721 is disordered.

It belongs to the polyribonucleotide nucleotidyltransferase family. Requires Mg(2+) as cofactor.

The protein resides in the cytoplasm. The catalysed reaction is RNA(n+1) + phosphate = RNA(n) + a ribonucleoside 5'-diphosphate. In terms of biological role, involved in mRNA degradation. Catalyzes the phosphorolysis of single-stranded polyribonucleotides processively in the 3'- to 5'-direction. In Parasynechococcus marenigrum (strain WH8102), this protein is Polyribonucleotide nucleotidyltransferase.